Reading from the N-terminus, the 402-residue chain is Multidrug resistance protein MdtH (402 aa).

11 helical membrane-spanning segments follow: residues 13-33 (YFLL…FPLI), 34-54 (SIRF…ALGL), 99-116 (PWVL…GTLF), 139-159 (LLMM…SWLL), 165-185 (LVCG…AWLL), 214-234 (VLTL…LPVM), 243-263 (AAVK…LYPL), 277-297 (LMAG…ASNL), 300-320 (LFTL…ARET), 340-360 (LGLA…FDAG), and 368-388 (LPWA…WWQF).

The protein belongs to the major facilitator superfamily. DHA1 family. MdtH (TC 2.A.1.2.21) subfamily.

Its subcellular location is the cell inner membrane. The sequence is that of Multidrug resistance protein MdtH from Cronobacter sakazakii (strain ATCC BAA-894) (Enterobacter sakazakii).